The chain runs to 697 residues: CENP-A multicopy suppressor protein 2 (697 aa).

The segment at 351–378 (CQNCGTIKTANWRNATYMNITLMLCNAC) adopts a GATA-type; atypical zinc-finger fold. The segment at 443–484 (PLNRLTSLDSTHSAPDPNHISKPSVVNQQKSRGGPRTAKLKN) is disordered. Positions 445-455 (NRLTSLDSTHS) are enriched in polar residues.

In terms of assembly, interacts with CENP-A.

The protein localises to the nucleus. Its subcellular location is the chromosome. The protein resides in the centromere. Required for proper chromosome segregation via regulation of CENP-A localization to the centromere. The chain is CENP-A multicopy suppressor protein 2 (ams2) from Schizosaccharomyces pombe (strain 972 / ATCC 24843) (Fission yeast).